Reading from the N-terminus, the 447-residue chain is uncharacterized protein (447 aa).

3 disordered regions span residues 1 to 80 (MTFE…EQSS), 115 to 184 (ATTQ…PNNP), and 295 to 322 (LQDNASLTSQGSNLSSQNSGLSSSSSGI). The segment covering 11–32 (QRRDESAYRLGEEDGRQKGESS) has biased composition (basic and acidic residues). The segment covering 42–51 (KNPSNVSFWS) has biased composition (polar residues). Positions 61 to 72 (VKTDRPQFHRAD) are enriched in basic and acidic residues. The segment covering 115-158 (ATTQSSPISTSFNPQLPSNSNTNRFDFGSESQLSSNYTNDTGLS) has biased composition (polar residues). Low complexity predominate over residues 300–321 (SLTSQGSNLSSQNSGLSSSSSG). 2 consecutive transmembrane segments (helical) span residues 385–405 (FMFLFTFGIVFPPLWILASFL) and 424–444 (IINRVVACLGVAITFLFIGLG).

The protein resides in the membrane. This is an uncharacterized protein from Schizosaccharomyces pombe (strain 972 / ATCC 24843) (Fission yeast).